Here is a 160-residue protein sequence, read N- to C-terminus: SsrA-binding protein (160 aa).

Positions 133-160 (GKKLHDKRDTEKERDWKREQQRLLRDRG) are disordered. Over residues 138–160 (DKRDTEKERDWKREQQRLLRDRG) the composition is skewed to basic and acidic residues.

The protein belongs to the SmpB family.

The protein resides in the cytoplasm. In terms of biological role, required for rescue of stalled ribosomes mediated by trans-translation. Binds to transfer-messenger RNA (tmRNA), required for stable association of tmRNA with ribosomes. tmRNA and SmpB together mimic tRNA shape, replacing the anticodon stem-loop with SmpB. tmRNA is encoded by the ssrA gene; the 2 termini fold to resemble tRNA(Ala) and it encodes a 'tag peptide', a short internal open reading frame. During trans-translation Ala-aminoacylated tmRNA acts like a tRNA, entering the A-site of stalled ribosomes, displacing the stalled mRNA. The ribosome then switches to translate the ORF on the tmRNA; the nascent peptide is terminated with the 'tag peptide' encoded by the tmRNA and targeted for degradation. The ribosome is freed to recommence translation, which seems to be the essential function of trans-translation. The chain is SsrA-binding protein from Rhizorhabdus wittichii (strain DSM 6014 / CCUG 31198 / JCM 15750 / NBRC 105917 / EY 4224 / RW1) (Sphingomonas wittichii).